The primary structure comprises 83 residues: Small ribosomal subunit protein eS21 (83 aa).

This sequence belongs to the eukaryotic ribosomal protein eS21 family. As to quaternary structure, component of the 40S small ribosomal subunit. Interacts with sta.

The protein localises to the cytoplasm. Its subcellular location is the cytosol. It localises to the rough endoplasmic reticulum. In terms of biological role, may be an associated component of the ribosome rather than a core structural subunit. May act as a translation initiation factor. Has a role in regulation of cell proliferation in the hematopoietic organs and the imaginal disks of larva. The polypeptide is Small ribosomal subunit protein eS21 (RpS21) (Drosophila grimshawi (Hawaiian fruit fly)).